The following is a 752-amino-acid chain: Phosphatidylinositol 4-phosphate 5-kinase 1 (752 aa).

MORN repeat units lie at residues 81–103 (YIGS…DGCM), 104–126 (YEGD…SGAT), 127–149 (YEGE…DGDT), 150–172 (YRGT…NGDF), 173–195 (YEGT…NGNQ), 196–218 (YTGE…NGNR), and 219–241 (YEGL…DGSS). Residues 349-748 (SKGHKKYDLM…RFRDFISRIF (400 aa)) enclose the PIPK domain. Positions 708-729 (YDITKKIEHAYKSLQADPASIS) are activation loop.

In terms of processing, phosphorylation inactivates the enzyme. Expressed in the whole plant, preferentially in roots. Strongly expressed in meristematic tissues, namely procambial cell layers.

The enzyme catalyses a 1,2-diacyl-sn-glycero-3-phospho-(1D-myo-inositol 4-phosphate) + ATP = a 1,2-diacyl-sn-glycero-3-phospho-(1D-myo-inositol-4,5-bisphosphate) + ADP + H(+). Catalyzes the synthesis of phosphatidylinositol 4,5-bisphosphate and phosphatidylinositol 3,4-bisphosphate. The polypeptide is Phosphatidylinositol 4-phosphate 5-kinase 1 (PIP5K1) (Arabidopsis thaliana (Mouse-ear cress)).